Here is a 267-residue protein sequence, read N- to C-terminus: 4-hydroxy-tetrahydrodipicolinate reductase (267 aa).

NAD(+)-binding positions include 8–13 (GAAGRM) and D34. NADP(+) is bound at residue R35. Residues 98 to 100 (GTT) and 122 to 125 (AANF) contribute to the NAD(+) site. Catalysis depends on H155, which acts as the Proton donor/acceptor. (S)-2,3,4,5-tetrahydrodipicolinate is bound at residue H156. The active-site Proton donor is the K159. 165 to 166 (GT) contacts (S)-2,3,4,5-tetrahydrodipicolinate.

Belongs to the DapB family.

It is found in the cytoplasm. It carries out the reaction (S)-2,3,4,5-tetrahydrodipicolinate + NAD(+) + H2O = (2S,4S)-4-hydroxy-2,3,4,5-tetrahydrodipicolinate + NADH + H(+). The catalysed reaction is (S)-2,3,4,5-tetrahydrodipicolinate + NADP(+) + H2O = (2S,4S)-4-hydroxy-2,3,4,5-tetrahydrodipicolinate + NADPH + H(+). It functions in the pathway amino-acid biosynthesis; L-lysine biosynthesis via DAP pathway; (S)-tetrahydrodipicolinate from L-aspartate: step 4/4. In terms of biological role, catalyzes the conversion of 4-hydroxy-tetrahydrodipicolinate (HTPA) to tetrahydrodipicolinate. The sequence is that of 4-hydroxy-tetrahydrodipicolinate reductase from Pseudomonas putida (strain GB-1).